Reading from the N-terminus, the 799-residue chain is 1-phosphatidylinositol 4,5-bisphosphate phosphodiesterase delta-4 (799 aa).

Residues 16-124 (LLMQEGMPMR…WMRGLHLLVD (109 aa)) form the PH domain. Residues 26 to 53 (KVRSKSWKKLRYFRLQNDGMTVWHARQA) are substrate binding. EF-hand domains are found at residues 134–169 (RLDQWLSDWFQRGDKNQDGKMSFQEVQRLLHLMNVE), 170–205 (MDQEYAFSLFQAADTSQSGTLEGEEFVEFYKALTKR), and 206–237 (AEVQELFESFSADGQKLTLLEFSDFLREEQKE). Ca(2+) contacts are provided by Asp147, Asn149, Asp151, Lys153, Glu158, Asp183, Ser185, Ser187, Thr189, and Glu194. Residues 213 to 243 (ESFSADGQKLTLLEFSDFLREEQKERDCTSE) carry the GBA motif. A PI-PLC X-box domain is found at 290–435 (QDMTQPLNHY…LRRKILVKGK (146 aa)). The active site involves His305. Residues Asn306, Glu335, and Asp337 each contribute to the Ca(2+) site. Residue His350 is part of the active site. Glu384 is a Ca(2+) binding site. Substrate contacts are provided by Lys433 and Lys435. Ser460 carries the post-translational modification Phosphoserine. Residues 530–646 (LSSLVIYLKS…GYVLKPDFLR (117 aa)) form the PI-PLC Y-box domain. Substrate contacts are provided by Ser559 and Arg586. The C2 domain maps to 646 to 773 (RDNQSSFHPE…QGYRHIHLLS (128 aa)). Ile687, Asp689, Asn713, Asp742, Tyr743, and Asp744 together coordinate Ca(2+). Positions 768–771 (HIHL) match the PDZ-binding motif.

Interacts with GRIP1. Interacts (via GBA motif) with guanine nucleotide-binding protein G(i) alpha subunit GNAI3 (inactive GDP-bound form); low-affinity interaction. Requires Ca(2+) as cofactor.

It is found in the membrane. The protein localises to the nucleus. Its subcellular location is the cytoplasm. The protein resides in the endoplasmic reticulum. It catalyses the reaction a 1,2-diacyl-sn-glycero-3-phospho-(1D-myo-inositol-4,5-bisphosphate) + H2O = 1D-myo-inositol 1,4,5-trisphosphate + a 1,2-diacyl-sn-glycerol + H(+). The catalysed reaction is a 1,2-diacyl-sn-glycero-3-phospho-(1D-myo-inositol) + H2O = 1D-myo-inositol 1-phosphate + a 1,2-diacyl-sn-glycerol + H(+). Hydrolyzes the phosphatidylinositol 4,5-bisphosphate (PIP2) to generate 2 second messenger molecules diacylglycerol (DAG) and inositol 1,4,5-trisphosphate (IP3). DAG mediates the activation of protein kinase C (PKC), while IP3 releases Ca(2+) from intracellular stores. Required for acrosome reaction in sperm during fertilization, probably by acting as an important enzyme for intracellular Ca(2+) mobilization in the zona pellucida-induced acrosome reaction. May play a role in cell growth. Modulates the liver regeneration in cooperation with nuclear PKC. Overexpression up-regulates the Erk signaling pathway and proliferation. The polypeptide is 1-phosphatidylinositol 4,5-bisphosphate phosphodiesterase delta-4 (PLCD4) (Macaca fascicularis (Crab-eating macaque)).